We begin with the raw amino-acid sequence, 297 residues long: GTPase Era (297 aa).

One can recognise an Era-type G domain in the interval 5–173 (RAGFVSFVGR…TTELMRLLPV (169 aa)). A G1 region spans residues 13-20 (GRPNVGKS). Residue 13–20 (GRPNVGKS) coordinates GTP. The segment at 39-43 (QTTRR) is G2. The interval 60–63 (DTPG) is G3. GTP contacts are provided by residues 60–64 (DTPGV) and 123–126 (TKID). The segment at 123-126 (TKID) is G4. Residues 152-154 (VSA) form a G5 region. The KH type-2 domain maps to 205-283 (VEDELPHSLA…FLSIRVKVAK (79 aa)).

This sequence belongs to the TRAFAC class TrmE-Era-EngA-EngB-Septin-like GTPase superfamily. Era GTPase family. Monomer.

The protein localises to the cytoplasm. It localises to the cell membrane. In terms of biological role, an essential GTPase that binds both GDP and GTP, with rapid nucleotide exchange. Plays a role in 16S rRNA processing and 30S ribosomal subunit biogenesis and possibly also in cell cycle regulation and energy metabolism. This chain is GTPase Era, found in Leifsonia xyli subsp. xyli (strain CTCB07).